The chain runs to 165 residues: Small histone ubiquitination factor 1 (165 aa).

Over residues 1 to 17 (MSSRRNDYHYDGNDHQY) the composition is skewed to basic and acidic residues. The segment at 1 to 86 (MSSRRNDYHY…STRASFGAAS (86 aa)) is disordered. 2 stretches are compositionally biased toward low complexity: residues 29-38 (SFYESSYRSR) and 50-60 (SSYDSPSSSTN). Positions 73–86 (PSNNSTRASFGAAS) are enriched in polar residues.

As to quaternary structure, component of the histone H2B ubiquitin ligase complex (HULC) composed of at least brl1, brl2, rhp6 and shf1.

The protein localises to the nucleus. The protein resides in the cytoplasm. It is found in the cytoskeleton. Its subcellular location is the microtubule organizing center. It localises to the spindle pole body. Component of the histone H2B ubiquitin ligase complex (HULC) which plays a role in transcription regulation by catalyzing the monoubiquitination of histone H2B to form H2BK123ub1. H2BK123ub1 gives a specific tag for epigenetic transcriptional activation and is also a prerequisite for H3K4me and H3K79me formation. The polypeptide is Small histone ubiquitination factor 1 (shf1) (Schizosaccharomyces pombe (strain 972 / ATCC 24843) (Fission yeast)).